The sequence spans 1324 residues: Tetratricopeptide repeat protein 21 homolog (1324 aa).

16 TPR repeats span residues 58 to 91 (PALA…NDVA), 414 to 446 (SPLY…LVEM), 582 to 615 (SLYH…PRKE), 669 to 702 (DQLV…QSNF), 737 to 770 (PGSY…QSKD), 772 to 804 (QLAE…YKDK), 806 to 837 (MRLK…DPEP), 847 to 880 (IQFL…HSRI), 894 to 927 (ARIC…HETD), 929 to 961 (KANL…DPHN), 963 to 995 (EANS…NPQH), 997 to 1029 (HALS…NPRC), 1033 to 1066 (SGYN…AAGW), 1205 to 1238 (EKCW…NCNC), 1240 to 1272 (KAFE…TKER), and 1274 to 1307 (PGFG…NPQY).

The protein belongs to the TTC21 family. In terms of assembly, component of the IFT complex A (IFT-A) composed of at least che-11, daf-10, dyf-2, ift-139, ift-43 and ifta-1. In terms of tissue distribution, expressed in ciliated sensory neurons in the head and tail.

It is found in the cell projection. It localises to the cilium. The protein resides in the cytoplasm. Its subcellular location is the cytoskeleton. The protein localises to the cilium basal body. It is found in the dendrite. Functionally, component of the IFT complex A (IFT-A), a complex required for retrograde ciliary transport. In particular, may act redundantly with the intraflagellar transport protein ift-43 to regulate the transport of specific ciliary cargo proteins such as che-3 which are related to motility. Functions in cilia biogenesis. The protein is Tetratricopeptide repeat protein 21 homolog of Caenorhabditis elegans.